We begin with the raw amino-acid sequence, 99 residues long: Integration host factor subunit alpha (99 aa).

Belongs to the bacterial histone-like protein family. Heterodimer of an alpha and a beta chain.

This protein is one of the two subunits of integration host factor, a specific DNA-binding protein that functions in genetic recombination as well as in transcriptional and translational control. The sequence is that of Integration host factor subunit alpha from Nitrosococcus oceani (strain ATCC 19707 / BCRC 17464 / JCM 30415 / NCIMB 11848 / C-107).